Reading from the N-terminus, the 623-residue chain is V-type proton ATPase catalytic subunit A (623 aa).

Residue 252 to 259 (GAFGCGKT) participates in ATP binding.

This sequence belongs to the ATPase alpha/beta chains family. In terms of assembly, V-ATPase is a heteromultimeric enzyme composed of a peripheral catalytic V1 complex (main components: subunits A, B, C, D, E, and F) attached to an integral membrane V0 proton pore complex (main component: the proteolipid protein).

It catalyses the reaction ATP + H2O + 4 H(+)(in) = ADP + phosphate + 5 H(+)(out). Its function is as follows. Catalytic subunit of the peripheral V1 complex of vacuolar ATPase. V-ATPase vacuolar ATPase is responsible for acidifying a variety of intracellular compartments in eukaryotic cells. In Citrus unshiu (Satsuma mandarin), this protein is V-type proton ATPase catalytic subunit A.